A 442-amino-acid polypeptide reads, in one-letter code: Probable D-serine dehydratase (442 aa).

Position 111 is an N6-(pyridoxal phosphate)lysine (K111).

This sequence belongs to the serine/threonine dehydratase family. DsdA subfamily. Pyridoxal 5'-phosphate serves as cofactor.

It catalyses the reaction D-serine = pyruvate + NH4(+). The sequence is that of Probable D-serine dehydratase from Sinorhizobium medicae (strain WSM419) (Ensifer medicae).